Here is a 570-residue protein sequence, read N- to C-terminus: Protein FAM227A (570 aa).

The span at 87–99 shows a compositional bias: basic and acidic residues; sequence LREKTRSSPEDKV. 3 disordered regions span residues 87–112, 336–374, and 519–570; these read LREK…CKGS, PAQS…QNTA, and KAAD…TSKP. A Phosphotyrosine modification is found at tyrosine 343. A compositionally biased stretch (polar residues) spans 345–362; the sequence is PQSSSANSPSEKTSSAKQ. Serine 348 and serine 349 each carry phosphoserine. Composition is skewed to basic and acidic residues over residues 363–374 and 540–562; these read NSEKSLRMQNTA and SPDK…EVEH.

The protein belongs to the FAM227 family.

The sequence is that of Protein FAM227A (FAM227A) from Homo sapiens (Human).